A 169-amino-acid polypeptide reads, in one-letter code: uncharacterized protein (169 aa).

This is an uncharacterized protein from Escherichia coli (strain K12).